The sequence spans 270 residues: Structure-specific endonuclease subunit SLX1 (270 aa).

In terms of domain architecture, GIY-YIG spans 9–94 (RFFGVYLLYC…PQASRRLTHV (86 aa)). The segment at 182 to 234 (CSLCARLLQDEEGPLCCPHPGCPLRAHIICLAEEFLQEEPGQLLPLEGHCPSC) adopts an SLX1-type zinc-finger fold.

Belongs to the SLX1 family. As to quaternary structure, forms a heterodimer with SLX4. A divalent metal cation serves as cofactor. Expressed in testis, colon, bone marrow, brain, thymus and to a lesser extent in heart, kidney, skeletal muscle and spleen.

It is found in the nucleus. Catalytic subunit of the SLX1-SLX4 structure-specific endonuclease that resolves DNA secondary structures generated during DNA repair and recombination. Has endonuclease activity towards branched DNA substrates, introducing single-strand cuts in duplex DNA close to junctions with ss-DNA. Has a preference for 5'-flap structures, and promotes symmetrical cleavage of static and migrating Holliday junctions (HJs). Resolves HJs by generating two pairs of ligatable, nicked duplex products. In Mus musculus (Mouse), this protein is Structure-specific endonuclease subunit SLX1 (Slx1b).